Here is a 931-residue protein sequence, read N- to C-terminus: Netrin receptor UNC5C (931 aa).

Positions methionine 1–alanine 40 are cleaved as a signal peptide. Residues glutamine 41–tyrosine 380 lie on the Extracellular side of the membrane. In terms of domain architecture, Ig-like spans proline 62–tyrosine 159. 9 disulfides stabilise this stretch: cysteine 83-cysteine 144, cysteine 95-cysteine 142, cysteine 188-cysteine 239, cysteine 272-cysteine 309, cysteine 276-cysteine 313, cysteine 287-cysteine 299, cysteine 328-cysteine 362, cysteine 332-cysteine 367, and cysteine 340-cysteine 352. The Ig-like C2-type domain maps to arginine 161–isoleucine 256. Asparagine 236 is a glycosylation site (N-linked (GlcNAc...) asparagine). 2 TSP type-1 domains span residues asparagine 260 to proline 314 and aspartate 316 to methionine 368. Residue asparagine 361 is glycosylated (N-linked (GlcNAc...) asparagine). The helical transmembrane segment at valine 381–valine 401 threads the bilayer. At tyrosine 402–tyrosine 931 the chain is on the cytoplasmic side. Residues tyrosine 402–tyrosine 931 form a required for netrin-mediated axon repulsion of neuronal growth cones region. Residue serine 502 is modified to Phosphoserine. In terms of domain architecture, ZU5 spans cysteine 530 to serine 673. Position 568 is a phosphotyrosine (tyrosine 568). The tract at residues serine 694–lysine 712 is interaction with DCC. One can recognise a Death domain in the interval glutamine 850–glycine 929.

The protein belongs to the unc-5 family. Interacts with DCC (via cytoplasmic domain). Interacts (tyrosine phosphorylated form) with PTPN11. Interacts (via extracellular domain) with FLRT3 (via extracellular domain). Interacts (via Ig-like C2-type domain) with DSCAM (via extracellular domain). Interacts (via death domain) with DAPK1. Interacts (via cytoplasmic domain) with TUBB3; this interaction is decreased by NTN1/Netrin-1. Post-translationally, proteolytically cleaved by caspases during apoptosis. The cleavage does not take place when the receptor is associated with netrin ligand. Its cleavage by caspases is required to induce apoptosis. Phosphorylated on different cytoplasmic tyrosine residues. Phosphorylation of Tyr-568 leads to an interaction with PTPN11 phosphatase, suggesting that its activity is regulated by phosphorylation/dephosphorylation. Tyrosine phosphorylation is netrin-dependent. In terms of tissue distribution, mainly expressed in brain. Expressed in temporal lobe cortical neurons and in neurons of the hippocampal pyramidal layer. Also expressed in kidney. Not expressed in developing or adult lung.

It is found in the cell membrane. The protein resides in the cell surface. Its subcellular location is the synapse. It localises to the synaptosome. The protein localises to the cell projection. It is found in the axon. The protein resides in the dendrite. Its subcellular location is the growth cone. It localises to the lamellipodium. The protein localises to the filopodium. Its function is as follows. Receptor for netrin required for axon guidance. Mediates axon repulsion of neuronal growth cones in the developing nervous system upon ligand binding. NTN1/Netrin-1 binding might cause dissociation of UNC5C from polymerized TUBB3 in microtubules and thereby lead to increased microtubule dynamics and axon repulsion. Axon repulsion in growth cones may also be caused by its association with DCC that may trigger signaling for repulsion. Might also collaborate with DSCAM in NTN1-mediated axon repulsion independently of DCC. Also involved in corticospinal tract axon guidance independently of DCC. Involved in dorsal root ganglion axon projection towards the spinal cord. It also acts as a dependence receptor required for apoptosis induction when not associated with netrin ligand. This is Netrin receptor UNC5C (UNC5C) from Homo sapiens (Human).